The chain runs to 48 residues: Small, acid-soluble spore protein O (48 aa).

Residues 1–23 (MVKRKANHVINGMNDAKSQGKGA) form a disordered region.

It belongs to the SspO family.

Its subcellular location is the spore core. This Bacillus velezensis (strain DSM 23117 / BGSC 10A6 / LMG 26770 / FZB42) (Bacillus amyloliquefaciens subsp. plantarum) protein is Small, acid-soluble spore protein O.